The following is a 331-amino-acid chain: C-type lectin domain family 4 member K (331 aa).

Residues 1 to 41 (MPEAEMKEEAPEAHFTVDKQNISLWPREPPPKQDLSPVLRK) lie on the Cytoplasmic side of the membrane. The chain crosses the membrane as a helical; Signal-anchor for type II membrane protein span at residues 42–62 (PLCICVAFTCLALVLVTSIVL). Residues 63–331 (QAVFYPRLMG…CKRPYVQTTE (269 aa)) lie on the Extracellular side of the membrane. Residues N90 and N116 are each glycosylated (N-linked (GlcNAc...) asparagine). Residues 106–197 (DDAEVQMQIV…LKQQSDILEM (92 aa)) adopt a coiled-coil conformation. In terms of domain architecture, C-type lectin spans 205–323 (FSGNFYYFSR…CDNTFLFICK (119 aa)). Disulfide bonds link C226–C322 and C298–C314.

Homotrimer. As to expression, expressed by Langerhans cells. Expressed in dendritic cells and by scattered cells in lymph nodes and spleen. Also detected in some non-lymphoid tissues such as lung, liver and heart.

The protein localises to the membrane. Its function is as follows. Calcium-dependent lectin displaying mannose-binding specificity. Induces the formation of Birbeck granules (BGs); is a potent regulator of membrane superimposition and zippering. Binds to sulfated as well as mannosylated glycans, keratan sulfate (KS) and beta-glucans. Facilitates uptake of antigens and is involved in the routing and/or processing of antigen for presentation to T cells. This chain is C-type lectin domain family 4 member K (Cd207), found in Mus musculus (Mouse).